The sequence spans 579 residues: Putative diflavin flavoprotein A 2 (579 aa).

Positions Gln50–His243 are zinc metallo-hydrolase. Residues His99, Glu101, Asp103, His166, Asp185, and His243 each coordinate Fe cation. Residues Val272–Ser460 form the Flavodoxin-like domain. The flavodoxin-reductase-like stretch occupies residues Leu461–Tyr579.

This sequence in the N-terminal section; belongs to the zinc metallo-hydrolase group 3 family. The protein in the C-terminal section; belongs to the flavodoxin reductase family. Requires Fe cation as cofactor.

Functionally, mediates electron transfer from NADH to oxygen, reducing it to water. This modular protein has 3 redox cofactors, in other organisms the same activity requires 2 or 3 proteins. The protein is Putative diflavin flavoprotein A 2 (dfa2) of Nostoc sp. (strain PCC 7120 / SAG 25.82 / UTEX 2576).